Here is a 270-residue protein sequence, read N- to C-terminus: Shikimate dehydrogenase (NADP(+)) (270 aa).

Shikimate-binding positions include 15-17 (SKS) and Thr-62. Catalysis depends on Lys-66, which acts as the Proton acceptor. Residue Asp-78 participates in NADP(+) binding. The shikimate site is built by Asn-87 and Asp-103. NADP(+) contacts are provided by residues 128-132 (GAGGA), 152-157 (NRTVDR), and Leu-213. Tyr-215 lines the shikimate pocket. NADP(+) is bound at residue Gly-237.

Belongs to the shikimate dehydrogenase family. In terms of assembly, homodimer.

It catalyses the reaction shikimate + NADP(+) = 3-dehydroshikimate + NADPH + H(+). It functions in the pathway metabolic intermediate biosynthesis; chorismate biosynthesis; chorismate from D-erythrose 4-phosphate and phosphoenolpyruvate: step 4/7. In terms of biological role, involved in the biosynthesis of the chorismate, which leads to the biosynthesis of aromatic amino acids. Catalyzes the reversible NADPH linked reduction of 3-dehydroshikimate (DHSA) to yield shikimate (SA). In Halorhodospira halophila (strain DSM 244 / SL1) (Ectothiorhodospira halophila (strain DSM 244 / SL1)), this protein is Shikimate dehydrogenase (NADP(+)).